A 258-amino-acid polypeptide reads, in one-letter code: Small ribosomal subunit protein eS1 (258 aa).

Residues 235-258 are disordered; the sequence is VASSGDAGSAVRRDGYEPPVQESV.

It belongs to the eukaryotic ribosomal protein eS1 family. In terms of assembly, component of the small ribosomal subunit. Mature ribosomes consist of a small (40S) and a large (60S) subunit. The 40S subunit contains about 33 different proteins and 1 molecule of RNA (18S). The 60S subunit contains about 49 different proteins and 3 molecules of RNA (28S, 5.8S and 5S).

It localises to the cytoplasm. The protein is Small ribosomal subunit protein eS1 of Trichoplax adhaerens (Trichoplax reptans).